Reading from the N-terminus, the 373-residue chain is 4-hydroxy-3-methylbut-2-en-1-yl diphosphate synthase (flavodoxin) (373 aa).

Cysteine 270, cysteine 273, cysteine 305, and glutamate 312 together coordinate [4Fe-4S] cluster.

It belongs to the IspG family. Requires [4Fe-4S] cluster as cofactor.

The enzyme catalyses (2E)-4-hydroxy-3-methylbut-2-enyl diphosphate + oxidized [flavodoxin] + H2O + 2 H(+) = 2-C-methyl-D-erythritol 2,4-cyclic diphosphate + reduced [flavodoxin]. The protein operates within isoprenoid biosynthesis; isopentenyl diphosphate biosynthesis via DXP pathway; isopentenyl diphosphate from 1-deoxy-D-xylulose 5-phosphate: step 5/6. Functionally, converts 2C-methyl-D-erythritol 2,4-cyclodiphosphate (ME-2,4cPP) into 1-hydroxy-2-methyl-2-(E)-butenyl 4-diphosphate. The protein is 4-hydroxy-3-methylbut-2-en-1-yl diphosphate synthase (flavodoxin) of Proteus mirabilis (strain HI4320).